The chain runs to 1192 residues: Protein argonaute 13 (1192 aa).

One can recognise a PAZ domain in the interval 183–296 (TVIQFVEEFL…LPMEVCKIVE (114 aa)). A Piwi domain is found at 472-770 (LLIVILLEVS…AASHAHCCIK (299 aa)).

Belongs to the argonaute family. Ago subfamily.

Probably involved in the RNA silencing pathway. May bind to short RNAs such as microRNAs (miRNAs) or short interfering RNAs (siRNAs), and represses the translation of mRNAs which are complementary to them. In Oryza sativa subsp. japonica (Rice), this protein is Protein argonaute 13 (AGO13).